The following is a 476-amino-acid chain: Cardiolipin synthase (476 aa).

2 helical membrane passes run 2–22 and 31–51; these read HLLI…IIFI and WAWI…YILF. PLD phosphodiesterase domains lie at 207-234 and 389-416; these read INYR…GDEY and EKGF…DIRS. Catalysis depends on residues histidine 212, lysine 214, aspartate 219, histidine 394, lysine 396, and aspartate 401.

It belongs to the phospholipase D family. Cardiolipin synthase subfamily.

Its subcellular location is the cell membrane. The enzyme catalyses 2 a 1,2-diacyl-sn-glycero-3-phospho-(1'-sn-glycerol) = a cardiolipin + glycerol. Its function is as follows. Catalyzes the reversible phosphatidyl group transfer from one phosphatidylglycerol molecule to another to form cardiolipin (CL) (diphosphatidylglycerol) and glycerol. This Clostridium perfringens (strain SM101 / Type A) protein is Cardiolipin synthase (cls).